The sequence spans 414 residues: Histidinol dehydrogenase (414 aa).

3 residues coordinate NAD(+): Y116, Q177, and N200. Residues T223, Q245, and H248 each coordinate substrate. Zn(2+)-binding residues include Q245 and H248. Catalysis depends on proton acceptor residues E313 and H314. The substrate site is built by H314, D347, E401, and H406. A Zn(2+)-binding site is contributed by D347. Zn(2+) is bound at residue H406.

Belongs to the histidinol dehydrogenase family. Zn(2+) serves as cofactor.

It carries out the reaction L-histidinol + 2 NAD(+) + H2O = L-histidine + 2 NADH + 3 H(+). It participates in amino-acid biosynthesis; L-histidine biosynthesis; L-histidine from 5-phospho-alpha-D-ribose 1-diphosphate: step 9/9. Its function is as follows. Catalyzes the sequential NAD-dependent oxidations of L-histidinol to L-histidinaldehyde and then to L-histidine. In Staphylococcus epidermidis (strain ATCC 35984 / DSM 28319 / BCRC 17069 / CCUG 31568 / BM 3577 / RP62A), this protein is Histidinol dehydrogenase.